We begin with the raw amino-acid sequence, 367 residues long: Glutamate 5-kinase (367 aa).

Residue Lys10 participates in ATP binding. The substrate site is built by Ser50, Asp137, and Asn149. Residues 169–170 and 211–217 contribute to the ATP site; these read TD and TGGMGTK. Positions 275-353 constitute a PUA domain; it reads AGEITVDAGA…QQIDAILGYE (79 aa).

Belongs to the glutamate 5-kinase family.

The protein resides in the cytoplasm. The catalysed reaction is L-glutamate + ATP = L-glutamyl 5-phosphate + ADP. It functions in the pathway amino-acid biosynthesis; L-proline biosynthesis; L-glutamate 5-semialdehyde from L-glutamate: step 1/2. Its function is as follows. Catalyzes the transfer of a phosphate group to glutamate to form L-glutamate 5-phosphate. This chain is Glutamate 5-kinase, found in Klebsiella pneumoniae subsp. pneumoniae (strain ATCC 700721 / MGH 78578).